The following is a 178-amino-acid chain: Putative pre-16S rRNA nuclease (178 aa).

Composition is skewed to basic and acidic residues over residues 1 to 18 (MDHA…DPGR) and 50 to 60 (PRSKDRGPDAP). Disordered stretches follow at residues 1 to 23 (MDHA…RRIG) and 36 to 60 (SDPD…PDAP).

The protein belongs to the YqgF nuclease family.

The protein localises to the cytoplasm. Could be a nuclease involved in processing of the 5'-end of pre-16S rRNA. This is Putative pre-16S rRNA nuclease from Rhodococcus opacus (strain B4).